The chain runs to 1416 residues: DNA-directed RNA polymerase subunit beta' (1416 aa).

Residues Cys-71, Cys-73, Cys-86, and Cys-89 each contribute to the Zn(2+) site. Mg(2+)-binding residues include Asp-461, Asp-463, and Asp-465. Zn(2+) is bound by residues Cys-815, Cys-889, Cys-896, and Cys-899.

Belongs to the RNA polymerase beta' chain family. The RNAP catalytic core consists of 2 alpha, 1 beta, 1 beta' and 1 omega subunit. When a sigma factor is associated with the core the holoenzyme is formed, which can initiate transcription. The cofactor is Mg(2+). Zn(2+) is required as a cofactor.

The catalysed reaction is RNA(n) + a ribonucleoside 5'-triphosphate = RNA(n+1) + diphosphate. Its function is as follows. DNA-dependent RNA polymerase catalyzes the transcription of DNA into RNA using the four ribonucleoside triphosphates as substrates. The protein is DNA-directed RNA polymerase subunit beta' of Haemophilus influenzae (strain PittEE).